The chain runs to 287 residues: Cyclopropane mycolic acid synthase 1 (287 aa).

S-adenosyl-L-methionine is bound by residues 33–34 (YS), 68–76 (LLDVGCGWG), 94–99 (TLSKNQ), and 123–124 (WE). The active site involves cysteine 269.

This sequence belongs to the CFA/CMAS family. As to quaternary structure, homodimer.

The protein resides in the cytoplasm. It carries out the reaction a 1-acyl-2-(9Z)-enoyl-sn-glycero-3-phospholipid + S-adenosyl-L-methionine = a 1-acyl-2-(9-cyclopronane)-acyl-sn-glycero-3-phospholipid + S-adenosyl-L-homocysteine + H(+). The protein operates within lipid metabolism; mycolic acid biosynthesis. Catalyzes the conversion of a double bond to a cyclopropane ring at the distal position of an alpha mycolic acid via the transfer of a methylene group from S-adenosyl-L-methionine. Cyclopropanated mycolic acids are key factors participating in cell envelope permeability, host immunomodulation and persistence. The protein is Cyclopropane mycolic acid synthase 1 (cmaA1) of Mycobacterium tuberculosis (strain ATCC 25177 / H37Ra).